The primary structure comprises 73 residues: Large ribosomal subunit protein uL30 (73 aa).

Belongs to the universal ribosomal protein uL30 family. In terms of assembly, part of the 50S ribosomal subunit.

This is Large ribosomal subunit protein uL30 from Borrelia hermsii (strain HS1 / DAH).